The sequence spans 135 residues: Ribosome-binding factor A (135 aa).

This sequence belongs to the RbfA family. As to quaternary structure, monomer. Binds 30S ribosomal subunits, but not 50S ribosomal subunits or 70S ribosomes.

The protein localises to the cytoplasm. Its function is as follows. One of several proteins that assist in the late maturation steps of the functional core of the 30S ribosomal subunit. Associates with free 30S ribosomal subunits (but not with 30S subunits that are part of 70S ribosomes or polysomes). Required for efficient processing of 16S rRNA. May interact with the 5'-terminal helix region of 16S rRNA. The chain is Ribosome-binding factor A from Methylobacterium nodulans (strain LMG 21967 / CNCM I-2342 / ORS 2060).